The following is a 58-amino-acid chain: Small ribosomal subunit protein bS21 (58 aa).

This sequence belongs to the bacterial ribosomal protein bS21 family.

This is Small ribosomal subunit protein bS21 from Latilactobacillus sakei subsp. sakei (strain 23K) (Lactobacillus sakei subsp. sakei).